Reading from the N-terminus, the 218-residue chain is Large ribosomal subunit protein uL3 (218 aa).

Gln153 is modified (N5-methylglutamine).

It belongs to the universal ribosomal protein uL3 family. As to quaternary structure, part of the 50S ribosomal subunit. Forms a cluster with proteins L14 and L19. In terms of processing, methylated by PrmB.

One of the primary rRNA binding proteins, it binds directly near the 3'-end of the 23S rRNA, where it nucleates assembly of the 50S subunit. This is Large ribosomal subunit protein uL3 from Alkalilimnicola ehrlichii (strain ATCC BAA-1101 / DSM 17681 / MLHE-1).